Here is a 945-residue protein sequence, read N- to C-terminus: MNFAEEEPSKKYCIKGKHVAIICGVVVAVGLIVGLSVGLTRSCEQDTTPAPSQPPPEASTALPPQDQNVCPDSEDESGEWKNFRLPDFINPVHYDLEVKALMEEDRYTGIVTISVNLSKPTRDLWLHIRETKITKLPELRRPSGEQVPIRRCFEYKKQEYVVIQAAEDLAATSGDSVYRLTMEFKGWLNGSLVGFYKTTYMEDGQIRSIAATDHEPTDARKSFPCFDEPNKKSTYSISIIHPKEYSALSNMPEEKSEMVDDNWKKTTFVKSVPMSTYLVCFAVHRFTAIERKSRSGKPLKVYVQPNQKETAEYAANITQAVFDYFEDYFAMEYALPKLDKIAIPDFGTGAMENWGLVTYRETNLLYDPLLSASSNQQRVASVVAHELVHQWFGNTVTMDWWDDLWLNEGFASFFEFLGVNHAEKDWQMLSQVLLEDVFPVQEDDSLMSSHPVVVTVSTPAEITSVFDGISYSKGASILRMLQDWITPEKFQKGCQIYLKKFQFANAKTSDFWDSLQEASNLPVKEVMDTWTSQMGYPVVTVSGRQNITQKRFLLDSKADPSQPPSELGYTWNIPVRWADNDNSRITVYNRLDKGGITLNANLSGDAFLKINPDHIGFYRVNYEGGTWDWIAEALSSNHTRFSAADRSSFIDDAFALARAQLLNYKIALNLTMYLKSEEDFLPWERVISSVSYIISMFEDDRELYPMIETYFQGQVKPVADLLGWQDTGSHITKLLRASILGFACKMGDREALGNASQLFDSWLKGSASIPVNLRLLVYRYGMQNSGNEAAWNYTLEQYQKTSLAQEKEKLLYGLASVKDVKLLARYLEMLKDPNIIKTQDVFTVIRYISYNSYGKTMAWNWIQLNWDYLVSRFTINDRYLGRIVTIAEPFNTELQLWQMQSFFAKYPNAGAGAKPREQVLETVKNNIEWLNVNRQSIREWFASLP.

Topologically, residues 1–18 are cytoplasmic; it reads MNFAEEEPSKKYCIKGKH. The chain crosses the membrane as a helical; Signal-anchor for type II membrane protein span at residues 19–39; that stretch reads VAIICGVVVAVGLIVGLSVGL. Topologically, residues 40 to 945 are extracellular; it reads TRSCEQDTTP…SIREWFASLP (906 aa). The interval 43–77 is disordered; it reads CEQDTTPAPSQPPPEASTALPPQDQNVCPDSEDES. N-linked (GlcNAc...) asparagine glycosylation is found at asparagine 116 and asparagine 189. Residue glutamate 215 participates in substrate binding. N-linked (GlcNAc...) asparagine glycosylation is present at asparagine 316. 349 to 353 provides a ligand contact to substrate; sequence GAMEN. Zn(2+) is bound at residue histidine 385. The active-site Proton acceptor is glutamate 386. Residues histidine 389 and glutamate 408 each contribute to the Zn(2+) site. N-linked (GlcNAc...) asparagine glycosylation is found at asparagine 546, asparagine 601, asparagine 637, asparagine 669, asparagine 754, and asparagine 792. Arginine 878 is a substrate binding site.

It belongs to the peptidase M1 family. Homodimer; disulfide-linked. The cofactor is Zn(2+). In terms of tissue distribution, early B-lineage cells and certain stromal cell of hemopoietic tissues. Also expressed by capillary endothelial cells, placenta, and epithelial cells of the intestine and proximal renal tubules.

Its subcellular location is the cell membrane. It catalyses the reaction Release of N-terminal glutamate (and to a lesser extent aspartate) from a peptide.. Substrate specificity is modulated by calcium which enhances the enzymatic activity for cleavage of acidic residues while reducing its activity with basic residues. Inhibited by aminopeptidase inhibitors amastatin and bestatin. Functionally, regulates central hypertension through its calcium-modulated preference to cleave N-terminal acidic residues from peptides such as angiotensin II. The protein is Glutamyl aminopeptidase (Enpep) of Mus musculus (Mouse).